The following is a 244-amino-acid chain: Probable transcriptional regulatory protein TT_C0469 (244 aa).

It belongs to the TACO1 family.

It is found in the cytoplasm. The sequence is that of Probable transcriptional regulatory protein TT_C0469 from Thermus thermophilus (strain ATCC BAA-163 / DSM 7039 / HB27).